The chain runs to 312 residues: Taste receptor type 2 member 135 (312 aa).

Residues 1–19 (MSTGHTVLGCQTTDKTVVT) are Extracellular-facing. The chain crosses the membrane as a helical span at residues 20–40 (LFIILVLLCLVAVVGNGFIII). The Cytoplasmic segment spans residues 41–66 (ALGMKWLLRRTLSAHNKLLISLAASR). The helical transmembrane segment at 67–87 (FCLQCVVIGKNIYVFLNPTSF) threads the bilayer. Topologically, residues 88 to 97 (PYNPVIQLLN) are extracellular. A helical transmembrane segment spans residues 98 to 118 (LMWDFLTAATIWLCSLLGFFY). At 119 to 140 (CVKIATLTHPVFVWLKYRLPGW) the chain is on the cytoplasmic side. Residues 141-161 (VPWMLLSAVGMSSLTSILCFI) traverse the membrane as a helical segment. At 162–198 (GNYMIYQNHAKSGHQPWNVTGNSLRHSLEKFYFFSIK) the chain is on the extracellular side. An N-linked (GlcNAc...) asparagine glycan is attached at Asn-179. Residues 199-219 (IIMWTIPTVVFSIFMSLLLVS) traverse the membrane as a helical segment. Topologically, residues 220–244 (LVRHMKKTFLALSELRDVWAQAHFK) are cytoplasmic. Residues 245–265 (ALLPLLSFIVLFISCFLTLVL) form a helical membrane-spanning segment. At 266 to 277 (SSASNTPYQEFR) the chain is on the extracellular side. A helical transmembrane segment spans residues 278–298 (YWMWQVVIHLCTVIHPIVILF). The Cytoplasmic segment spans residues 299–312 (SNPVLRVVIKRGCC).

This sequence belongs to the G-protein coupled receptor T2R family.

The protein localises to the membrane. Putative taste receptor which may play a role in the perception of bitterness. This chain is Taste receptor type 2 member 135 (Tas2r135), found in Mus musculus (Mouse).